A 144-amino-acid chain; its full sequence is Large ribosomal subunit protein uL15 (144 aa).

The disordered stretch occupies residues 1–45 (MNLNTLSPDPGSRPSRRRVGRGIGSGLGKTCGKGHKGQKSRAGGY). A compositionally biased stretch (gly residues) spans 21 to 31 (RGIGSGLGKTC).

Belongs to the universal ribosomal protein uL15 family. Part of the 50S ribosomal subunit.

Binds to the 23S rRNA. This is Large ribosomal subunit protein uL15 from Legionella pneumophila (strain Corby).